We begin with the raw amino-acid sequence, 162 residues long: Lectin BRA-3 (162 aa).

A signal peptide spans 1–24; that stretch reads MQRSEIVQAVTLLVVVFAITTAEC. A C-type lectin domain is found at 25–152; that stretch reads TCPGNLDWQE…NKNKNFLCKM (128 aa). Cystine bridges form between Cys26–Cys39, Cys56–Cys150, and Cys125–Cys142.

In terms of assembly, homotetramer; disulfide-linked. In terms of tissue distribution, coelemic fluid.

In terms of biological role, sugar-binding protein which recognizes specific carbohydrate structures and agglutinates a variety of animal cells by binding to cell-surface glycoproteins and glycolipids. Calcium-dependent lectin. Invertebrate lectins may be involved in defense functions. The protein is Lectin BRA-3 of Megabalanus rosa (Acorn barnacle).